The following is a 215-amino-acid chain: Thiamine-phosphate synthase (215 aa).

Residues 40–44 (QLRIK) and N72 contribute to the 4-amino-2-methyl-5-(diphosphooxymethyl)pyrimidine site. Residues D73 and D92 each coordinate Mg(2+). S111 serves as a coordination point for 4-amino-2-methyl-5-(diphosphooxymethyl)pyrimidine. 137-139 (TTT) provides a ligand contact to 2-[(2R,5Z)-2-carboxy-4-methylthiazol-5(2H)-ylidene]ethyl phosphate. K140 provides a ligand contact to 4-amino-2-methyl-5-(diphosphooxymethyl)pyrimidine. 2-[(2R,5Z)-2-carboxy-4-methylthiazol-5(2H)-ylidene]ethyl phosphate is bound by residues G169 and 189 to 190 (VS).

This sequence belongs to the thiamine-phosphate synthase family. Mg(2+) is required as a cofactor.

The enzyme catalyses 2-[(2R,5Z)-2-carboxy-4-methylthiazol-5(2H)-ylidene]ethyl phosphate + 4-amino-2-methyl-5-(diphosphooxymethyl)pyrimidine + 2 H(+) = thiamine phosphate + CO2 + diphosphate. It carries out the reaction 2-(2-carboxy-4-methylthiazol-5-yl)ethyl phosphate + 4-amino-2-methyl-5-(diphosphooxymethyl)pyrimidine + 2 H(+) = thiamine phosphate + CO2 + diphosphate. It catalyses the reaction 4-methyl-5-(2-phosphooxyethyl)-thiazole + 4-amino-2-methyl-5-(diphosphooxymethyl)pyrimidine + H(+) = thiamine phosphate + diphosphate. Its pathway is cofactor biosynthesis; thiamine diphosphate biosynthesis; thiamine phosphate from 4-amino-2-methyl-5-diphosphomethylpyrimidine and 4-methyl-5-(2-phosphoethyl)-thiazole: step 1/1. Functionally, condenses 4-methyl-5-(beta-hydroxyethyl)thiazole monophosphate (THZ-P) and 2-methyl-4-amino-5-hydroxymethyl pyrimidine pyrophosphate (HMP-PP) to form thiamine monophosphate (TMP). The polypeptide is Thiamine-phosphate synthase (Proteus mirabilis (strain HI4320)).